The primary structure comprises 505 residues: Cytochrome P450 52C1 (505 aa).

Residues 4 to 21 (LFCFLAGIIVVYKAAQYY) traverse the membrane as a helical segment. Cys-453 is a heme binding site.

This sequence belongs to the cytochrome P450 family. Requires heme as cofactor.

It is found in the membrane. Together with an NADPH cytochrome P450 the enzyme system catalyzes the terminal hydroxylation as the first step in the assimilation of alkanes and fatty acids. The sequence is that of Cytochrome P450 52C1 (CYP52C1) from Candida tropicalis (Yeast).